Reading from the N-terminus, the 909-residue chain is Valine--tRNA ligase (909 aa).

The 'HIGH' region motif lies at 52–62; the sequence is PNVTGVLHVGH. The short motif at 542-546 is the 'KMSKS' region element; that stretch reads KMSKS. K545 is a binding site for ATP. Residues 843-902 adopt a coiled-coil conformation; the sequence is IDIDQLKKRFEKELEKNEQNASKIDSKLKNENFVKNAPPEVIEGEKEKHAEFLRRIEKLK.

Belongs to the class-I aminoacyl-tRNA synthetase family. ValS type 1 subfamily. In terms of assembly, monomer.

The protein resides in the cytoplasm. The enzyme catalyses tRNA(Val) + L-valine + ATP = L-valyl-tRNA(Val) + AMP + diphosphate. In terms of biological role, catalyzes the attachment of valine to tRNA(Val). As ValRS can inadvertently accommodate and process structurally similar amino acids such as threonine, to avoid such errors, it has a 'posttransfer' editing activity that hydrolyzes mischarged Thr-tRNA(Val) in a tRNA-dependent manner. This is Valine--tRNA ligase from Treponema denticola (strain ATCC 35405 / DSM 14222 / CIP 103919 / JCM 8153 / KCTC 15104).